A 211-amino-acid polypeptide reads, in one-letter code: Prolactin-3C1 (211 aa).

Positions 1–29 are cleaved as a signal peptide; sequence MQLSLTQARTWKGLLLLVSCMILWISVTP. N-linked (GlcNAc...) asparagine glycans are attached at residues Asn-77 and Asn-173. Cysteines 80 and 187 form a disulfide.

The protein belongs to the somatotropin/prolactin family. In terms of tissue distribution, expressed exclusively in decidual tissue.

It is found in the secreted. The polypeptide is Prolactin-3C1 (Prl3c1) (Rattus norvegicus (Rat)).